The sequence spans 82 residues: Exodeoxyribonuclease 7 small subunit (82 aa).

It belongs to the XseB family. Heterooligomer composed of large and small subunits.

Its subcellular location is the cytoplasm. It carries out the reaction Exonucleolytic cleavage in either 5'- to 3'- or 3'- to 5'-direction to yield nucleoside 5'-phosphates.. Functionally, bidirectionally degrades single-stranded DNA into large acid-insoluble oligonucleotides, which are then degraded further into small acid-soluble oligonucleotides. This chain is Exodeoxyribonuclease 7 small subunit, found in Mycobacterium marinum (strain ATCC BAA-535 / M).